The chain runs to 537 residues: 2-isopropylmalate synthase (537 aa).

One can recognise a Pyruvate carboxyltransferase domain in the interval 8–269 (VLIFDTTLRD…YFNGYLGRAE (262 aa)). Residues Asp17, His208, His210, and Asn244 each contribute to the Mn(2+) site. The segment at 408–537 (QLAGVQVSCG…QRAPLPAPAL (130 aa)) is regulatory domain.

The protein belongs to the alpha-IPM synthase/homocitrate synthase family. LeuA type 1 subfamily. In terms of assembly, homodimer. Requires Mn(2+) as cofactor.

It localises to the cytoplasm. It catalyses the reaction 3-methyl-2-oxobutanoate + acetyl-CoA + H2O = (2S)-2-isopropylmalate + CoA + H(+). Its pathway is amino-acid biosynthesis; L-leucine biosynthesis; L-leucine from 3-methyl-2-oxobutanoate: step 1/4. In terms of biological role, catalyzes the condensation of the acetyl group of acetyl-CoA with 3-methyl-2-oxobutanoate (2-ketoisovalerate) to form 3-carboxy-3-hydroxy-4-methylpentanoate (2-isopropylmalate). In Synechococcus sp. (strain RCC307), this protein is 2-isopropylmalate synthase.